The primary structure comprises 627 residues: (R)-linalool synthase, chloroplastic (627 aa).

Residues 1–21 constitute a chloroplast transit peptide; the sequence is MAFVSIAPLASRCCVHKSFVS. Mg(2+)-binding residues include aspartate 378, aspartate 382, and glutamate 530. The DDXXD motif signature appears at 378 to 382; the sequence is DDIYD.

The protein belongs to the terpene synthase family. Tpsd subfamily. Requires Mg(2+) as cofactor. The cofactor is Mn(2+).

Its subcellular location is the plastid. The protein localises to the chloroplast. The enzyme catalyses (2E)-geranyl diphosphate + H2O = (R)-linalool + diphosphate. It functions in the pathway terpene metabolism; oleoresin biosynthesis. Its function is as follows. Terpene synthase (TPS) involved in the biosynthesis of monoterpene natural products included in conifer oleoresin secretions and volatile emissions; these compounds contribute to biotic and abiotic stress defense against herbivores and pathogens. Catalyzes the conversion of (2E)-geranyl diphosphate (GPP) to (R)-linalool. This chain is (R)-linalool synthase, chloroplastic, found in Picea glauca (White spruce).